Reading from the N-terminus, the 37-residue chain is Large ribosomal subunit protein bL36 (37 aa).

The protein belongs to the bacterial ribosomal protein bL36 family.

The protein is Large ribosomal subunit protein bL36 of Dictyoglomus thermophilum (strain ATCC 35947 / DSM 3960 / H-6-12).